A 556-amino-acid chain; its full sequence is Membrane protein insertase YidC (556 aa).

Transmembrane regions (helical) follow at residues 6-26, 332-352, 358-378, 428-448, and 501-521; these read IVLY…WQID, LDLT…FSLM, VVGN…LAFY, LGGC…YWVL, and VMMF…SGLV.

It belongs to the OXA1/ALB3/YidC family. Type 1 subfamily. In terms of assembly, interacts with the Sec translocase complex via SecD. Specifically interacts with transmembrane segments of nascent integral membrane proteins during membrane integration.

It localises to the cell inner membrane. Required for the insertion and/or proper folding and/or complex formation of integral membrane proteins into the membrane. Involved in integration of membrane proteins that insert both dependently and independently of the Sec translocase complex, as well as at least some lipoproteins. Aids folding of multispanning membrane proteins. The chain is Membrane protein insertase YidC from Legionella pneumophila (strain Paris).